Here is a 196-residue protein sequence, read N- to C-terminus: Probable malonic semialdehyde reductase RutE (196 aa).

It belongs to the nitroreductase family. HadB/RutE subfamily. The cofactor is FMN.

It carries out the reaction 3-hydroxypropanoate + NADP(+) = 3-oxopropanoate + NADPH + H(+). Its function is as follows. May reduce toxic product malonic semialdehyde to 3-hydroxypropionic acid, which is excreted. The sequence is that of Probable malonic semialdehyde reductase RutE from Shigella flexneri serotype 5b (strain 8401).